The sequence spans 212 residues: Transmembrane protein 186 (212 aa).

The Mitochondrial matrix segment spans residues 1–78 (MAAVLRAVAR…YLSRLKVAQT (78 aa)). A helical membrane pass occupies residues 79-99 (ALTVAALPPGLYCYSQGLMPF). The Mitochondrial intermembrane portion of the chain corresponds to 100 to 101 (SS). Residues 102-122 (LCLAGGVAGFALAMLCWMSHF) form a helical membrane-spanning segment. The Mitochondrial matrix portion of the chain corresponds to 123–212 (FRRLVGILYV…QVFGVLDALK (90 aa)).

Belongs to the TMEM186 family. In terms of assembly, part of the mitochondrial complex I assembly/MCIA complex that comprises at least the core subunits TMEM126B, NDUFAF1, ECSIT and ACAD9 and complement subunits such as COA1 and TMEM186. Interacts with MT-ND3.

It localises to the mitochondrion inner membrane. Functionally, as part of the MCIA complex, required for efficient assembly of the mitochondrial complex I. The sequence is that of Transmembrane protein 186 from Bos taurus (Bovine).